A 54-amino-acid chain; its full sequence is Ovomucoid (54 aa).

Residues 4 to 54 (VDCSDYPKPVCSLEYMPLCGSDNKTYGNKCNFCNAVADSNGTLTLSHFGKC) form the Kazal-like domain. 3 disulfide bridges follow: Cys6/Cys36, Cys14/Cys33, and Cys22/Cys54. N-linked (GlcNAc...) asparagine glycosylation occurs at Asn43.

Its subcellular location is the secreted. The polypeptide is Ovomucoid (Guira guira (Guira cuckoo)).